The primary structure comprises 528 residues: Tyrosine--tRNA ligase, cytoplasmic (528 aa).

Tyr-39 is an L-tyrosine binding site. The short motif at 44–52 is the 'HIGH' region element; that stretch reads TTGKPHVAY. Residues Tyr-166, Gln-170, Asp-173, and Gln-188 each contribute to the L-tyrosine site. Residues 222 to 226 carry the 'KMSKS' region motif; that stretch reads KMSSS. The Nuclear localization signal motif lies at 242–247; it reads KKKLKK. A disordered region spans residues 332-362; the sequence is EMKKLSNDAYPDASKQKSVPKGSTKNSGTEE. Residues 364 to 468 enclose the tRNA-binding domain; the sequence is DPSLLDLRVG…SGSAPGERIY (105 aa).

This sequence belongs to the class-I aminoacyl-tRNA synthetase family. As to quaternary structure, homodimer.

The protein localises to the cytoplasm. It localises to the nucleus. The enzyme catalyses tRNA(Tyr) + L-tyrosine + ATP = L-tyrosyl-tRNA(Tyr) + AMP + diphosphate + H(+). Catalyzes the attachment of tyrosine to tRNA(Tyr) in a two-step reaction: tyrosine is first activated by ATP to form Tyr-AMP and then transferred to the acceptor end of tRNA(Tyr). The polypeptide is Tyrosine--tRNA ligase, cytoplasmic (yars1) (Xenopus laevis (African clawed frog)).